Consider the following 391-residue polypeptide: UPF0328 protein ECU06_1650 (391 aa).

This sequence belongs to the UPF0328 family.

The polypeptide is UPF0328 protein ECU06_1650 (Encephalitozoon cuniculi (strain GB-M1) (Microsporidian parasite)).